Consider the following 793-residue polypeptide: Toll-like receptor 6 (793 aa).

An N-terminal signal peptide occupies residues 1-23 (MIKDKESPIRSCHFVYIVALVFG). Residues 24 to 584 (TIIQFSDESE…FQVSELSCNT (561 aa)) lie on the Extracellular side of the membrane. 19 LRR repeats span residues 54–77 (TKVLDLSQNNISELHLSDISFLSG), 78–101 (LRVLRLSHNRIQGLDISIFKFNHD), 102–122 (LEYLDLSHNQLQKISCHPITT), 123–147 (TLKHLDLSFNDFDALPICKEFGNLT), 148–168 (QLNFLGLSATKLQQLDLLPIA), 169–196 (HLHLSCILLDLEDYMKENKKESLQILNT), 197–219 (KKLHLVFHPNSFFSVQVDISANS), 220–250 (LGCLQLTNIKLNDYNCQVLLKFLSGLTGGPT), 251–277 (LLNFTLNHVETTWKCLVKVFQFLWPKP), 278–303 (IEYLNIYNLTIVESIDEEVFTYYKTT), 304–330 (LKALKIEHITNKVFIFSQTALYTVFSE), 331–354 (MNILMLTISDTRFIHMLCPQEPST), 355–378 (FKFLNFTQNSFTDSVFQNCDTLAR), 379–404 (LETLILQKNELKDLFKTSLMTKDMLS), 405–428 (LETLDVSWNSLEYDRSNGNCSWVG), 429–449 (SIVVLNLSSNALTDSVFRCLP), 450–473 (PRIKVLDLHNNRIRSIPKDVTGLE), 474–495 (TLQELNLASNSLAHLPGCGIFS), and 496–519 (SLSILIIEHNSISNPSADFFQSCQ). Asparagine 63 carries an N-linked (GlcNAc...) asparagine glycan. Cysteine 117 and cysteine 140 are disulfide-bonded. Asparagine 145 carries an N-linked (GlcNAc...) asparagine glycan. A disulfide bridge links cysteine 235 with cysteine 265. Residues asparagine 253 and asparagine 285 are each glycosylated (N-linked (GlcNAc...) asparagine). Cysteines 348 and 373 form a disulfide. Residue asparagine 359 is glycosylated (N-linked (GlcNAc...) asparagine). Residues asparagine 423 and asparagine 434 are each glycosylated (N-linked (GlcNAc...) asparagine). A disulfide bridge connects residues cysteine 424 and cysteine 447. In terms of domain architecture, LRRCT spans 520–575 (KIRSLKAGNNPFQCSCELRDFIQSVGQVSSDVVEGWPESYKCDYPESYKGTPLKDF). A helical membrane pass occupies residues 585-605 (ALLIITIVVPGLVLAVAVTVL). At 606–793 (CIYLDLPWYL…KLMEKAAEIH (188 aa)) the chain is on the cytoplasmic side. In terms of domain architecture, TIR spans 640-781 (LQFHAFISYS…LFWANLRASI (142 aa)).

It belongs to the Toll-like receptor family. As to quaternary structure, homodimer (via cytoplasmic TIR domain). Heterodimer with TLR2 via their respective extracellular domains. Binds MYD88 via their respective TIR domains. Interacts with CD36, following CD36 stimulation by oxLDL or amyloid-beta 42, and forms a heterodimer with TLR4. The trimeric complex is internalized and triggers inflammatory response. LYN kinase activity facilitates TLR4-TLR6 heterodimerization and signal initiation. The heterodimer TLR2:TLR6 interacts with CD14 and CD36 in response to triacylated lipopeptides. In terms of tissue distribution, highest expression levels seen in blood and lymph node, intermediate expression seen in spleen and lowest expression seen in the liver, lung and udder cistern.

It is found in the cell membrane. The protein localises to the cytoplasmic vesicle. It localises to the phagosome membrane. Its subcellular location is the membrane raft. The protein resides in the golgi apparatus. Its function is as follows. Participates in the innate immune response to Gram-positive bacteria and fungi. Specifically recognizes diacylated and, to a lesser extent, triacylated lipopeptides. In response to diacylated lipopeptides, forms the activation cluster TLR2:TLR6:CD14:CD36, this cluster triggers signaling from the cell surface and subsequently is targeted to the Golgi in a lipid-raft dependent pathway. Acts via MYD88 and TRAF6, leading to NF-kappa-B activation, cytokine secretion and the inflammatory response. Recognizes mycoplasmal macrophage-activating lipopeptide-2kD (MALP-2), soluble tuberculosis factor (STF), phenol-soluble modulin (PSM) and B.burgdorferi outer surface protein A lipoprotein (OspA-L) cooperatively with TLR2. In complex with TLR4, promotes sterile inflammation in monocytes/macrophages in response to oxidized low-density lipoprotein (oxLDL) or amyloid-beta 42. In this context, the initial signal is provided by oxLDL- or amyloid-beta 42-binding to CD36. This event induces the formation of a heterodimer of TLR4 and TLR6, which is rapidly internalized and triggers inflammatory response, leading to the NF-kappa-B-dependent production of CXCL1, CXCL2 and CCL9 cytokines, via MYD88 signaling pathway, and CCL5 cytokine, via TICAM1 signaling pathway, as well as IL1B secretion. The chain is Toll-like receptor 6 from Bos taurus (Bovine).